The following is a 543-amino-acid chain: Chaperonin GroEL (543 aa).

Residues threonine 29 to proline 32, aspartate 86 to threonine 90, glycine 413, asparagine 476 to alanine 478, and aspartate 492 each bind ATP.

This sequence belongs to the chaperonin (HSP60) family. In terms of assembly, forms a cylinder of 14 subunits composed of two heptameric rings stacked back-to-back. Interacts with the co-chaperonin GroES.

It is found in the cytoplasm. It catalyses the reaction ATP + H2O + a folded polypeptide = ADP + phosphate + an unfolded polypeptide.. Functionally, together with its co-chaperonin GroES, plays an essential role in assisting protein folding. The GroEL-GroES system forms a nano-cage that allows encapsulation of the non-native substrate proteins and provides a physical environment optimized to promote and accelerate protein folding. The chain is Chaperonin GroEL from Brevibacillus choshinensis.